Consider the following 373-residue polypeptide: MSEILHRSLTRPVRVGNLIIGGSNEVIIQSMTTTKTHDVEATVAEIKRLEEAGCQVVRVACPDERAADALAEIKSRINIPLVVDIHFDYKLALKAIESGVDKIRINPGNIGRREKVEAVVNAAKAKGIPIRIGVNAGSLEKQFLEKYGYPTAQGMVESAMHHVKILEDLGFYNTIISLKASDVNLALEAYTLAAKTFDYPLHVGITESGPLFSGSLKSAAGLGAILSLGIGSTVRVSLSDDPVEEVKVAKEVLKSFGLAANAATLISCPTCGRIEIDLISIAKEVEEYIQNINVNIKVAVLGCAVNGPGEAREADIGIAGARNEGLLFRHGKIIRKVPEATMVEELKKEIDAIAAEKMAEREREEQELANQSN.

[4Fe-4S] cluster contacts are provided by Cys268, Cys271, Cys303, and Glu310.

The protein belongs to the IspG family. The cofactor is [4Fe-4S] cluster.

The enzyme catalyses (2E)-4-hydroxy-3-methylbut-2-enyl diphosphate + oxidized [flavodoxin] + H2O + 2 H(+) = 2-C-methyl-D-erythritol 2,4-cyclic diphosphate + reduced [flavodoxin]. The protein operates within isoprenoid biosynthesis; isopentenyl diphosphate biosynthesis via DXP pathway; isopentenyl diphosphate from 1-deoxy-D-xylulose 5-phosphate: step 5/6. Functionally, converts 2C-methyl-D-erythritol 2,4-cyclodiphosphate (ME-2,4cPP) into 1-hydroxy-2-methyl-2-(E)-butenyl 4-diphosphate. In Exiguobacterium sp. (strain ATCC BAA-1283 / AT1b), this protein is 4-hydroxy-3-methylbut-2-en-1-yl diphosphate synthase (flavodoxin).